The following is a 685-amino-acid chain: Multisite-specific tRNA:(cytosine-C(5))-methyltransferase trm4b (685 aa).

S-adenosyl-L-methionine contacts are provided by residues 167-173, D208, D235, and D270; that span reads CAAPGSK. C323 acts as the Nucleophile in catalysis.

This sequence belongs to the class I-like SAM-binding methyltransferase superfamily. RsmB/NOP family. TRM4 subfamily.

The protein localises to the nucleus. The enzyme catalyses cytidine(49) in tRNA precursor + S-adenosyl-L-methionine = 5-methylcytidine(49) in tRNA precursor + S-adenosyl-L-homocysteine + H(+). It catalyses the reaction cytidine(50) in tRNA + S-adenosyl-L-methionine = 5-methylcytidine(50) in tRNA + S-adenosyl-L-homocysteine + H(+). It carries out the reaction cytidine(60) in tRNA(Asp) + S-adenosyl-L-methionine = 5-methylcytidine(60) in tRNA(Asp) + S-adenosyl-L-homocysteine + H(+). The catalysed reaction is cytidine(61) in tRNA(Asp) + S-adenosyl-L-methionine = 5-methylcytidine(61) in tRNA(Asp) + S-adenosyl-L-homocysteine + H(+). The enzyme catalyses cytidine(62) in tRNA(Asp) + S-adenosyl-L-methionine = 5-methylcytidine(62) in tRNA(Asp) + S-adenosyl-L-homocysteine + H(+). In terms of biological role, tRNA cytosine C(5)-methyltransferase that methylates cytosine to 5-methylcytosine (m5C) in tRNAs at position 49 and 50. Trm4a and trm4b methylate different sets of tRNAs. Also methylates cytosine to m5C at positions (60, 61 and 62) in tRNA(Asp). The chain is Multisite-specific tRNA:(cytosine-C(5))-methyltransferase trm4b from Schizosaccharomyces pombe (strain 972 / ATCC 24843) (Fission yeast).